The primary structure comprises 373 residues: Probable tRNA sulfurtransferase (373 aa).

One can recognise a THUMP domain in the interval 54-158 (NKNIEELSKV…NDVAYFYHKI (105 aa)). Residues 176 to 177 (LF), 201 to 202 (NF), lysine 256, glycine 278, and glutamine 287 contribute to the ATP site.

This sequence belongs to the ThiI family.

It is found in the cytoplasm. The catalysed reaction is [ThiI sulfur-carrier protein]-S-sulfanyl-L-cysteine + a uridine in tRNA + 2 reduced [2Fe-2S]-[ferredoxin] + ATP + H(+) = [ThiI sulfur-carrier protein]-L-cysteine + a 4-thiouridine in tRNA + 2 oxidized [2Fe-2S]-[ferredoxin] + AMP + diphosphate. The enzyme catalyses [ThiS sulfur-carrier protein]-C-terminal Gly-Gly-AMP + S-sulfanyl-L-cysteinyl-[cysteine desulfurase] + AH2 = [ThiS sulfur-carrier protein]-C-terminal-Gly-aminoethanethioate + L-cysteinyl-[cysteine desulfurase] + A + AMP + 2 H(+). The protein operates within cofactor biosynthesis; thiamine diphosphate biosynthesis. Catalyzes the ATP-dependent transfer of a sulfur to tRNA to produce 4-thiouridine in position 8 of tRNAs, which functions as a near-UV photosensor. Also catalyzes the transfer of sulfur to the sulfur carrier protein ThiS, forming ThiS-thiocarboxylate. This is a step in the synthesis of thiazole, in the thiamine biosynthesis pathway. The sulfur is donated as persulfide by IscS. In Saccharolobus islandicus (strain M.16.27) (Sulfolobus islandicus), this protein is Probable tRNA sulfurtransferase.